We begin with the raw amino-acid sequence, 141 residues long: ATP synthase F(0) complex subunit C3, mitochondrial (141 aa).

The transit peptide at 1-66 directs the protein to the mitochondrion; that stretch reads MFACAKLACT…REFQTTAVNR (66 aa). A helical membrane pass occupies residues 82 to 102; sequence VGVAGSGAGIGTVFGSLIIGY. Lysine 109 is modified (N6,N6,N6-trimethyllysine). The chain crosses the membrane as a helical span at residues 117 to 137; it reads ILGFALSEAMGLFCLMVAFLI.

Belongs to the ATPase C chain family. F-type ATPases have 2 components, CF(1) - the catalytic core - and CF(0) - the membrane proton channel. CF(1) has five subunits: alpha(3), beta(3), gamma(1), delta(1), epsilon(1). CF(0) has three main subunits: a, b and c. Interacts with TMEM70 and TMEM242. Post-translationally, trimethylated by ATPSCKMT at Lys-109. Methylation is required for proper incorporation of the C subunit into the ATP synthase complex and mitochondrial respiration.

The protein localises to the mitochondrion membrane. In terms of biological role, mitochondrial membrane ATP synthase (F(1)F(0) ATP synthase or Complex V) produces ATP from ADP in the presence of a proton gradient across the membrane which is generated by electron transport complexes of the respiratory chain. F-type ATPases consist of two structural domains, F(1) - containing the extramembraneous catalytic core and F(0) - containing the membrane proton channel, linked together by a central stalk and a peripheral stalk. During catalysis, ATP synthesis in the catalytic domain of F(1) is coupled via a rotary mechanism of the central stalk subunits to proton translocation. Part of the complex F(0) domain. A homomeric c-ring of probably 10 subunits is part of the complex rotary element. This Bos taurus (Bovine) protein is ATP synthase F(0) complex subunit C3, mitochondrial.